The chain runs to 529 residues: Probable serine/threonine protein phosphatase 2A regulatory subunit B''epsilon (529 aa).

Residues 60 to 110 form a disordered region; sequence KSGTPTNKSKNLPSVFLSSSTPPLSPRSSSGSPRFSRQRTSPPSLHSPLRS. Over residues 71-109 the composition is skewed to low complexity; the sequence is LPSVFLSSSTPPLSPRSSSGSPRFSRQRTSPPSLHSPLR. In terms of domain architecture, EF-hand spans 381 to 416; that stretch reads SSEPSLEYWFKCVDLDGNGVITSNEMQFFFEEQLHR. Positions 394, 396, 398, and 405 each coordinate Ca(2+). The interval 507–529 is disordered; the sequence is EEDVDEVSNGSADVWDEPLEPPF. The segment covering 520-529 has biased composition (acidic residues); sequence VWDEPLEPPF.

PP2A consists of a common heterodimeric core enzyme, composed of a 36 kDa catalytic subunit (subunit C) and a 65 kDa constant regulatory subunit (PR65 or subunit A), that associates with a variety of regulatory subunits. Proteins that associate with the core dimer include three families of regulatory subunits B (the R2/B/PR55/B55, R3/B''/PR72/PR130/PR59 and R5/B'/B56 families) and cell signaling molecules.

In terms of biological role, probable regulatory subunit of type 2A protein phosphatase. The polypeptide is Probable serine/threonine protein phosphatase 2A regulatory subunit B''epsilon (B''EPSILON) (Arabidopsis thaliana (Mouse-ear cress)).